The chain runs to 237 residues: CDP-diacylglycerol--inositol 3-phosphatidyltransferase (237 aa).

Topologically, residues 1–12 are cytoplasmic; the sequence is MGKNEQKDPNVY. A helical transmembrane segment spans residues 13 to 33; sequence FFVPNLIGFTRVFLVLISLYF. At 34–41 the chain is on the lumenal side; the sequence is MSWHPNYC. The chain crosses the membrane as a helical span at residues 42–62; that stretch reads TIVYLYSSLLDAFDGWAARKL. Mg(2+)-binding residues include Asp-52 and Asp-55. Residues Gly-56, Arg-60, and Thr-66 each contribute to the a CDP-1,2-diacyl-sn-glycerol site. Residues 63 to 71 are Cytoplasmic-facing; it reads HQATNFGAI. The chain crosses the membrane as a helical span at residues 72 to 92; it reads LDMVTDRCATSCLLCFLCAAY. Positions 73 and 77 each coordinate Mg(2+). Asp-77 functions as the Proton acceptor in the catalytic mechanism. The Lumenal portion of the chain corresponds to 93 to 94; the sequence is PK. The helical transmembrane segment at 95-115 threads the bilayer; the sequence is YAIIFQLLVSLDLASHYMHMY. At 116–144 the chain is on the cytoplasmic side; that stretch reads STLHQGASSHKTVTKKHNWMLRLYYGNNK. A helical membrane pass occupies residues 145–165; sequence VLFIFCAANEMFFVALYLLSF. Residues 166-185 lie on the Lumenal side of the membrane; that stretch reads TPRTPPKLGYLPVPSFIYST. The chain crosses the membrane as a helical span at residues 186–206; that stretch reads GELPLSYPTLLAVLCGPICLA. The Cytoplasmic portion of the chain corresponds to 207 to 237; it reads KQIINVVQLVNAANALVKMDVEQRRAAKKLQ.

Belongs to the CDP-alcohol phosphatidyltransferase class-I family. Mn(2+) serves as cofactor. It depends on Mg(2+) as a cofactor.

The protein resides in the microsome membrane. It is found in the endoplasmic reticulum membrane. Its subcellular location is the golgi apparatus membrane. The protein localises to the mitochondrion outer membrane. It carries out the reaction a CDP-1,2-diacyl-sn-glycerol + myo-inositol = a 1,2-diacyl-sn-glycero-3-phospho-(1D-myo-inositol) + CMP + H(+). Its function is as follows. Catalyzes the synthesis of phosphatidylinositol (PtdIns). This is CDP-diacylglycerol--inositol 3-phosphatidyltransferase (pis1) from Schizosaccharomyces pombe (strain 972 / ATCC 24843) (Fission yeast).